The primary structure comprises 196 residues: Imidazoleglycerol-phosphate dehydratase (196 aa).

The protein belongs to the imidazoleglycerol-phosphate dehydratase family.

The protein localises to the cytoplasm. The catalysed reaction is D-erythro-1-(imidazol-4-yl)glycerol 3-phosphate = 3-(imidazol-4-yl)-2-oxopropyl phosphate + H2O. It functions in the pathway amino-acid biosynthesis; L-histidine biosynthesis; L-histidine from 5-phospho-alpha-D-ribose 1-diphosphate: step 6/9. This Caulobacter sp. (strain K31) protein is Imidazoleglycerol-phosphate dehydratase.